The chain runs to 778 residues: Mitochondrial intermediate peptidase (778 aa).

The transit peptide at 1 to 37 (MIRTVTRPRQWQRWVYSSCLLQRAVPPAAARQQPRFT) directs the protein to the mitochondrion. Position 557 (His-557) interacts with Zn(2+). Glu-558 is an active-site residue. Residues His-561 and His-564 each coordinate Zn(2+).

This sequence belongs to the peptidase M3 family. Requires Zn(2+) as cofactor.

Its subcellular location is the mitochondrion matrix. It carries out the reaction Release of an N-terminal octapeptide as second stage of processing of some proteins imported into the mitochondrion.. Its function is as follows. Cleaves proteins, imported into the mitochondrion, to their mature size. While most mitochondrial precursor proteins are processed to the mature form in one step by mitochondrial processing peptidase (MPP), the sequential cleavage by MIP of an octapeptide after initial processing by MPP is a required step for a subgroup of nuclear-encoded precursor proteins destined for the matrix or the inner membrane. This Chaetomium globosum (strain ATCC 6205 / CBS 148.51 / DSM 1962 / NBRC 6347 / NRRL 1970) (Soil fungus) protein is Mitochondrial intermediate peptidase (OCT1).